Here is a 557-residue protein sequence, read N- to C-terminus: Dihydroxy-acid dehydratase (557 aa).

Aspartate 78 is a binding site for Mg(2+). Cysteine 119 is a [2Fe-2S] cluster binding site. Residues aspartate 120 and lysine 121 each coordinate Mg(2+). An N6-carboxylysine modification is found at lysine 121. [2Fe-2S] cluster is bound at residue cysteine 192. A Mg(2+)-binding site is contributed by glutamate 446. The active-site Proton acceptor is serine 472.

The protein belongs to the IlvD/Edd family. Homodimer. [2Fe-2S] cluster serves as cofactor. It depends on Mg(2+) as a cofactor.

The catalysed reaction is (2R)-2,3-dihydroxy-3-methylbutanoate = 3-methyl-2-oxobutanoate + H2O. The enzyme catalyses (2R,3R)-2,3-dihydroxy-3-methylpentanoate = (S)-3-methyl-2-oxopentanoate + H2O. The protein operates within amino-acid biosynthesis; L-isoleucine biosynthesis; L-isoleucine from 2-oxobutanoate: step 3/4. Its pathway is amino-acid biosynthesis; L-valine biosynthesis; L-valine from pyruvate: step 3/4. Functions in the biosynthesis of branched-chain amino acids. Catalyzes the dehydration of (2R,3R)-2,3-dihydroxy-3-methylpentanoate (2,3-dihydroxy-3-methylvalerate) into 2-oxo-3-methylpentanoate (2-oxo-3-methylvalerate) and of (2R)-2,3-dihydroxy-3-methylbutanoate (2,3-dihydroxyisovalerate) into 2-oxo-3-methylbutanoate (2-oxoisovalerate), the penultimate precursor to L-isoleucine and L-valine, respectively. In Campylobacter curvus (strain 525.92), this protein is Dihydroxy-acid dehydratase.